Consider the following 486-residue polypeptide: UDP-N-acetylmuramate--L-alanine ligase (486 aa).

126–132 is an ATP binding site; sequence GTHGKTT.

The protein belongs to the MurCDEF family.

It is found in the cytoplasm. The enzyme catalyses UDP-N-acetyl-alpha-D-muramate + L-alanine + ATP = UDP-N-acetyl-alpha-D-muramoyl-L-alanine + ADP + phosphate + H(+). The protein operates within cell wall biogenesis; peptidoglycan biosynthesis. Cell wall formation. This Pectobacterium atrosepticum (strain SCRI 1043 / ATCC BAA-672) (Erwinia carotovora subsp. atroseptica) protein is UDP-N-acetylmuramate--L-alanine ligase.